The sequence spans 619 residues: Chaperone protein HscA homolog (619 aa).

It belongs to the heat shock protein 70 family.

Functionally, chaperone involved in the maturation of iron-sulfur cluster-containing proteins. Has a low intrinsic ATPase activity which is markedly stimulated by HscB. The sequence is that of Chaperone protein HscA homolog from Haemophilus influenzae (strain 86-028NP).